The sequence spans 211 residues: Thymidylate kinase (211 aa).

Residue 10–17 coordinates ATP; it reads GPDGAGKT.

This sequence belongs to the thymidylate kinase family.

The catalysed reaction is dTMP + ATP = dTDP + ADP. In terms of biological role, phosphorylation of dTMP to form dTDP in both de novo and salvage pathways of dTTP synthesis. The chain is Thymidylate kinase (tmk) from Lactococcus lactis subsp. lactis (strain IL1403) (Streptococcus lactis).